The following is a 309-amino-acid chain: MVNGVLLLHKPVGMTSHDCVMKIRKLLKTKKVGHTGTLDPEVSGVLPICVGRATKIVEYLTEKSKTYDAEITLGFSTTTEDQTGETVETKPVNHDIDKADVEKVLNSLKGKQEQIPPMYSAVKVNGKKLYEYARAGIEVERPKRMITIEDIALTTEIKHHGETASFRFTVTCSKGTYVRTLAVMIGEKLGYPAHMSHLIRTASGDFSLDECFTFDELEAQAQSGTVEEHTVPIERALNHLPKWIISDTLAKKVENGALLETPEQFSEMTSGDRIAVFTESGTCLAIYFPHPAKKGLLKPAKVLMQKSEQ.

Asp39 serves as the catalytic Nucleophile.

The protein belongs to the pseudouridine synthase TruB family. Type 1 subfamily.

The catalysed reaction is uridine(55) in tRNA = pseudouridine(55) in tRNA. Its function is as follows. Responsible for synthesis of pseudouridine from uracil-55 in the psi GC loop of transfer RNAs. In Bacillus subtilis (strain 168), this protein is tRNA pseudouridine synthase B.